The chain runs to 242 residues: Probable transcriptional regulatory protein NMB1648 (242 aa).

Belongs to the TACO1 family.

It is found in the cytoplasm. This Neisseria meningitidis serogroup B (strain ATCC BAA-335 / MC58) protein is Probable transcriptional regulatory protein NMB1648.